The sequence spans 349 residues: Estrogen receptor (349 aa).

The nuclear receptor DNA-binding region spans Tyr-1–Met-5. The interval Tyr-1–Thr-38 is disordered. Basic residues predominate over residues Lys-12 to Arg-24. In terms of domain architecture, NR LBD spans Thr-65–His-301. Residues Pro-306–Pro-327 are disordered.

The protein belongs to the nuclear hormone receptor family. NR3 subfamily. As to quaternary structure, binds DNA as a homodimer. Can form a heterodimer with ER-beta.

The protein localises to the nucleus. Its function is as follows. The steroid hormones and their receptors are involved in the regulation of eukaryotic gene expression and affect cellular proliferation and differentiation in target tissues. The polypeptide is Estrogen receptor (ESR1) (Anolis carolinensis (Green anole)).